The primary structure comprises 297 residues: F-box only protein 2 (297 aa).

The segment at 1–47 (MDGDGDPESVSHPEEASPEEQPEEAGAEASAEEEQLREAEEEEEAEA) is disordered. The segment covering 16–47 (ASPEEQPEEAGAEASAEEEQLREAEEEEEAEA) has biased composition (acidic residues). Residues 48–95 (VEYLAELPEPLLLRVLAELPATELVQACRLVCLRWKELVDGAPLWLLK) enclose the F-box domain. Serine 106 is subject to Phosphoserine. An FBA domain is found at 117 to 297 (FYFLSKRRRN…VTNSSVWVEP (181 aa)). A carbohydrate is bound by residues 214–216 (RTD) and 279–280 (YW).

In terms of assembly, component of the SCF(FBXO2) complex consisting of CUL1, RBX1, SKP1 and FBXO2. Predominantly detected as heterodimer with SKP1; the heterodimer with SKP1 is not part of the SCF(FBXO2) complex. In terms of tissue distribution, detected in brain and cochlea, in epithelial support cells and hair cells of the organ of Corti (at protein level).

It localises to the cytoplasm. The protein resides in the microsome membrane. It functions in the pathway protein modification; protein ubiquitination. Substrate recognition component of a SCF (SKP1-CUL1-F-box protein) E3 ubiquitin-protein ligase complex that mediates the ubiquitination and subsequent proteasomal degradation of target proteins. Involved in the endoplasmic reticulum-associated degradation pathway (ERAD) for misfolded lumenal proteins by recognizing and binding sugar chains on unfolded glycoproteins that are retrotranslocated into the cytosol and promoting their ubiquitination and subsequent degradation. Prevents formation of cytosolic aggregates of unfolded glycoproteins that have been retrotranslocated into the cytosol. Able to recognize and bind denatured glycoproteins, preferentially those of the high-mannose type. This Mus musculus (Mouse) protein is F-box only protein 2 (Fbxo2).